The sequence spans 332 residues: Elongin-A (332 aa).

The F-box domain maps to 24–68; it reads LEDIGHMPYALVRRVLLKMSAEQLLRLERASPALLLEDEEAWQQL. The disordered stretch occupies residues 228 to 332; that stretch reads TPSAQPAASL…KPRVYIHTPR (105 aa). Residues 296–309 are compositionally biased toward polar residues; sequence LFSSPALSTLLPQQ. Positions 320–332 are enriched in basic residues; it reads PPKKPRVYIHTPR.

Belongs to the ELA1 family. As to quaternary structure, heterodimer with ELC1. Component of a CRL3 E3 ubiquitin ligase complex consisting of a cullin, the linker protein ELC1, the substrate receptor ELA1, and a RING protein. Interacts with the large RNA polymerase II subunit RPO21 in a manner dependent on DEF1.

As part of the CRL3 E3 ubiquitin ligase complex; polyubiquitylates monoubiquitylated RNA polymerase II subunit RPO21 to trigger its proteolysis; plays a role in global genomic repair. This is Elongin-A (ELA1) from Eremothecium gossypii (strain ATCC 10895 / CBS 109.51 / FGSC 9923 / NRRL Y-1056) (Yeast).